We begin with the raw amino-acid sequence, 335 residues long: Anthranilate phosphoribosyltransferase (335 aa).

Residues G79, 82 to 83, T87, 89 to 92, 107 to 115, and S119 contribute to the 5-phospho-alpha-D-ribose 1-diphosphate site; these read GD, NIST, and KHGSRSVSS. G79 contributes to the anthranilate binding site. S91 is a Mg(2+) binding site. R165 contributes to the anthranilate binding site. Residues D223 and E224 each coordinate Mg(2+).

This sequence belongs to the anthranilate phosphoribosyltransferase family. In terms of assembly, homodimer. Mg(2+) is required as a cofactor.

The catalysed reaction is N-(5-phospho-beta-D-ribosyl)anthranilate + diphosphate = 5-phospho-alpha-D-ribose 1-diphosphate + anthranilate. The protein operates within amino-acid biosynthesis; L-tryptophan biosynthesis; L-tryptophan from chorismate: step 2/5. In terms of biological role, catalyzes the transfer of the phosphoribosyl group of 5-phosphorylribose-1-pyrophosphate (PRPP) to anthranilate to yield N-(5'-phosphoribosyl)-anthranilate (PRA). This Helicobacter pylori (strain Shi470) protein is Anthranilate phosphoribosyltransferase.